The sequence spans 211 residues: Pyridoxine/pyridoxamine 5'-phosphate oxidase (211 aa).

Residues 7–10 (RREY) and K65 contribute to the substrate site. FMN-binding positions include 60-65 (RTVLLK), 75-76 (YT), R81, K82, and Q104. Residues Y122, R126, and S130 each coordinate substrate. Residues 139 to 140 (QS) and W184 contribute to the FMN site. 190–192 (RLH) is a substrate binding site. Position 194 (R194) interacts with FMN.

The protein belongs to the pyridoxamine 5'-phosphate oxidase family. As to quaternary structure, homodimer. The cofactor is FMN.

The enzyme catalyses pyridoxamine 5'-phosphate + O2 + H2O = pyridoxal 5'-phosphate + H2O2 + NH4(+). It carries out the reaction pyridoxine 5'-phosphate + O2 = pyridoxal 5'-phosphate + H2O2. The protein operates within cofactor metabolism; pyridoxal 5'-phosphate salvage; pyridoxal 5'-phosphate from pyridoxamine 5'-phosphate: step 1/1. Its pathway is cofactor metabolism; pyridoxal 5'-phosphate salvage; pyridoxal 5'-phosphate from pyridoxine 5'-phosphate: step 1/1. Its function is as follows. Catalyzes the oxidation of either pyridoxine 5'-phosphate (PNP) or pyridoxamine 5'-phosphate (PMP) into pyridoxal 5'-phosphate (PLP). The chain is Pyridoxine/pyridoxamine 5'-phosphate oxidase from Aeromonas hydrophila subsp. hydrophila (strain ATCC 7966 / DSM 30187 / BCRC 13018 / CCUG 14551 / JCM 1027 / KCTC 2358 / NCIMB 9240 / NCTC 8049).